A 122-amino-acid polypeptide reads, in one-letter code: UPF0231 protein VP2494 (122 aa).

This sequence belongs to the UPF0231 family.

The sequence is that of UPF0231 protein VP2494 from Vibrio parahaemolyticus serotype O3:K6 (strain RIMD 2210633).